The primary structure comprises 113 residues: MEIIMIFVCGILASISVYLVLSKSLIRIVMGTTLITHASNLFLITMGGLKHGEMPIYEKNISQYVDPIPHALILTAIVIAFATTAFFLVLAFRTYKELGTDNVERMKGVLDDD.

Transmembrane regions (helical) follow at residues 1–21, 28–48, and 72–92; these read MEIIMIFVCGILASISVYLVL, IVMGTTLITHASNLFLITMGG, and LILTAIVIAFATTAFFLVLAF.

The protein belongs to the CPA3 antiporters (TC 2.A.63) subunit C family. In terms of assembly, may form a heterooligomeric complex that consists of seven subunits: mnhA1, mnhB1, mnhC1, mnhD1, mnhE1, mnhF1 and mnhG1.

It is found in the cell membrane. Its function is as follows. Mnh complex is a Na(+)/H(+) antiporter involved in Na(+) excretion. This Staphylococcus haemolyticus (strain JCSC1435) protein is Na(+)/H(+) antiporter subunit C1 (mnhC1).